The chain runs to 283 residues: Bifunctional protein FolD (283 aa).

Residues 166–168 (GAS) and Ile-232 contribute to the NADP(+) site.

The protein belongs to the tetrahydrofolate dehydrogenase/cyclohydrolase family. In terms of assembly, homodimer.

It carries out the reaction (6R)-5,10-methylene-5,6,7,8-tetrahydrofolate + NADP(+) = (6R)-5,10-methenyltetrahydrofolate + NADPH. The catalysed reaction is (6R)-5,10-methenyltetrahydrofolate + H2O = (6R)-10-formyltetrahydrofolate + H(+). It participates in one-carbon metabolism; tetrahydrofolate interconversion. Catalyzes the oxidation of 5,10-methylenetetrahydrofolate to 5,10-methenyltetrahydrofolate and then the hydrolysis of 5,10-methenyltetrahydrofolate to 10-formyltetrahydrofolate. The protein is Bifunctional protein FolD of Hamiltonella defensa subsp. Acyrthosiphon pisum (strain 5AT).